Here is a 273-residue protein sequence, read N- to C-terminus: Putative pyruvate, phosphate dikinase regulatory protein (273 aa).

Residue 153–160 (GVSRTSKT) coordinates ADP.

This sequence belongs to the pyruvate, phosphate/water dikinase regulatory protein family. PDRP subfamily.

The enzyme catalyses N(tele)-phospho-L-histidyl/L-threonyl-[pyruvate, phosphate dikinase] + ADP = N(tele)-phospho-L-histidyl/O-phospho-L-threonyl-[pyruvate, phosphate dikinase] + AMP + H(+). The catalysed reaction is N(tele)-phospho-L-histidyl/O-phospho-L-threonyl-[pyruvate, phosphate dikinase] + phosphate + H(+) = N(tele)-phospho-L-histidyl/L-threonyl-[pyruvate, phosphate dikinase] + diphosphate. Functionally, bifunctional serine/threonine kinase and phosphorylase involved in the regulation of the pyruvate, phosphate dikinase (PPDK) by catalyzing its phosphorylation/dephosphorylation. The chain is Putative pyruvate, phosphate dikinase regulatory protein from Sinorhizobium medicae (strain WSM419) (Ensifer medicae).